We begin with the raw amino-acid sequence, 263 residues long: Acetyl-coenzyme A carboxylase carboxyl transferase subunit beta (263 aa).

A CoA carboxyltransferase N-terminal domain is found at Met-1–Ala-263. Cys-3, Cys-6, Cys-22, and Cys-25 together coordinate Zn(2+). The segment at Cys-3 to Cys-25 adopts a C4-type zinc-finger fold.

This sequence belongs to the AccD/PCCB family. Acetyl-CoA carboxylase is a heterohexamer composed of biotin carboxyl carrier protein (AccB), biotin carboxylase (AccC) and two subunits each of ACCase subunit alpha (AccA) and ACCase subunit beta (AccD). It depends on Zn(2+) as a cofactor.

The protein resides in the cytoplasm. The enzyme catalyses N(6)-carboxybiotinyl-L-lysyl-[protein] + acetyl-CoA = N(6)-biotinyl-L-lysyl-[protein] + malonyl-CoA. Its pathway is lipid metabolism; malonyl-CoA biosynthesis; malonyl-CoA from acetyl-CoA: step 1/1. Functionally, component of the acetyl coenzyme A carboxylase (ACC) complex. Biotin carboxylase (BC) catalyzes the carboxylation of biotin on its carrier protein (BCCP) and then the CO(2) group is transferred by the transcarboxylase to acetyl-CoA to form malonyl-CoA. This is Acetyl-coenzyme A carboxylase carboxyl transferase subunit beta from Treponema denticola (strain ATCC 35405 / DSM 14222 / CIP 103919 / JCM 8153 / KCTC 15104).